Here is a 188-residue protein sequence, read N- to C-terminus: Threonylcarbamoyl-AMP synthase (188 aa).

Residues 3–188 (QLQPSAVATT…RSGQILRNGS (186 aa)) form the YrdC-like domain.

Belongs to the SUA5 family. TsaC subfamily.

It localises to the cytoplasm. The enzyme catalyses L-threonine + hydrogencarbonate + ATP = L-threonylcarbamoyladenylate + diphosphate + H2O. Functionally, required for the formation of a threonylcarbamoyl group on adenosine at position 37 (t(6)A37) in tRNAs that read codons beginning with adenine. Catalyzes the conversion of L-threonine, HCO(3)(-)/CO(2) and ATP to give threonylcarbamoyl-AMP (TC-AMP) as the acyladenylate intermediate, with the release of diphosphate. In Shewanella frigidimarina (strain NCIMB 400), this protein is Threonylcarbamoyl-AMP synthase.